Here is a 407-residue protein sequence, read N- to C-terminus: Transmembrane protein 184B (407 aa).

Positions 1-24 (MTVRGAALAPDPASPTTAAASPSI) are disordered. The next 7 helical transmembrane spans lie at 40–60 (FLMT…ALLI), 84–104 (ILFI…FFTN), 121–141 (LVIY…SSIM), 178–198 (LQFC…QAFG), 214–234 (VTII…LFYF), 249–269 (FFMV…LAIL), and 290–310 (VAAG…ALAL). Residues 369-395 (TLEPGPTWRGGAHGLSRSHSLSGARDN) form a disordered region. A phosphoserine mark is found at Ser-388, Ser-402, and Ser-403.

It belongs to the TMEM184 family.

The protein resides in the membrane. Its function is as follows. May activate the MAP kinase signaling pathway. This is Transmembrane protein 184B (TMEM184B) from Bos taurus (Bovine).